Consider the following 113-residue polypeptide: DNA-binding protein Mevan_1162 (113 aa).

The span at 1 to 12 (MDPEEIKQKKLQ) shows a compositional bias: basic and acidic residues. Residues 1-22 (MDPEEIKQKKLQEMQAKAQDPE) are disordered.

The protein belongs to the PDCD5 family.

In Methanococcus vannielii (strain ATCC 35089 / DSM 1224 / JCM 13029 / OCM 148 / SB), this protein is DNA-binding protein Mevan_1162.